The chain runs to 349 residues: Hydrophobic dipeptide epimerase (349 aa).

Substrate-binding positions include T127 and 153–155; that span reads KIK. D186, E212, and D237 together coordinate Mg(2+). Substrate-binding positions include K259 and 309–311; that span reads DLD.

This sequence belongs to the mandelate racemase/muconate lactonizing enzyme family. Mg(2+) serves as cofactor.

Functionally, catalyzes the epimerization a variety of hydrophobic dipeptides. Epimerase activity is highest with L-Ala-L-Tyr, and lower with L-Ala-L-Met, L-Ala-L-Phe, L-Tyr-L-Ala, L-Tyr-L-Met and L-Tyr-L-Trp (in vitro). This Flavobacteria bacterium (strain MS024-2A) protein is Hydrophobic dipeptide epimerase.